Consider the following 282-residue polypeptide: MDRLPRIPLADIIDRFVDWITMTFGGFFDGIANGLAAFVNGIVTGLGFIPSILLTIIFAALAWWISTRGIALFTLIGFLLIDYLGYWDPMLQTLALVLTSVIISIVVGVPIGIWASQKETVRRIVTPILDLMQTMPAFVYLLPAIFFFNIGVVPGVVASVIFAMPPTIRMTVLGIKQVPADLIEATEAFGSTTAQRLFKVQLPLATKTILAGINQSIMLALSMVVIAAMVGAPGLGSEVYSAVTQLKTGVGVEAGIAIVIVAITLDRITQNIKVKKKSRGNA.

Residues 1–18 lie on the Extracellular side of the membrane; it reads MDRLPRIPLADIIDRFVD. A helical transmembrane segment spans residues 19 to 39; it reads WITMTFGGFFDGIANGLAAFV. Over 40–44 the chain is Cytoplasmic; it reads NGIVT. Residues 45 to 65 form a helical membrane-spanning segment; sequence GLGFIPSILLTIIFAALAWWI. Topologically, residues 66 to 69 are extracellular; it reads STRG. Residues 70-90 form a helical membrane-spanning segment; the sequence is IALFTLIGFLLIDYLGYWDPM. In terms of domain architecture, ABC transmembrane type-1 spans 90–269; that stretch reads MLQTLALVLT…IVAITLDRIT (180 aa). The Cytoplasmic segment spans residues 91–93; sequence LQT. A helical membrane pass occupies residues 94-114; that stretch reads LALVLTSVIISIVVGVPIGIW. Residues 115-137 are Extracellular-facing; it reads ASQKETVRRIVTPILDLMQTMPA. A helical membrane pass occupies residues 138–158; that stretch reads FVYLLPAIFFFNIGVVPGVVA. At 159 to 215 the chain is on the cytoplasmic side; sequence SVIFAMPPTIRMTVLGIKQVPADLIEATEAFGSTTAQRLFKVQLPLATKTILAGINQ. Residues 216–236 traverse the membrane as a helical segment; the sequence is SIMLALSMVVIAAMVGAPGLG. Residues 237–242 lie on the Extracellular side of the membrane; that stretch reads SEVYSA. The chain crosses the membrane as a helical span at residues 243–263; that stretch reads VTQLKTGVGVEAGIAIVIVAI. Residues 264 to 282 lie on the Cytoplasmic side of the membrane; it reads TLDRITQNIKVKKKSRGNA.

Belongs to the binding-protein-dependent transport system permease family. CysTW subfamily. In terms of assembly, the complex is composed of two ATP-binding proteins (OpuAA), two transmembrane proteins (OpuAB) and a solute-binding protein (OpuAC).

It is found in the cell membrane. In terms of biological role, involved in a multicomponent binding-protein-dependent transport system for glycine betaine; probably responsible for the translocation of the substrate across the membrane. The sequence is that of Glycine betaine transport system permease protein OpuAB (opuAB) from Bacillus subtilis (strain 168).